The following is a 23-amino-acid chain: Conolysin-Mt1 (23 aa).

Ser22 bears the Serine amide mark.

As to expression, expressed by the venom duct.

The protein localises to the secreted. In terms of biological role, this cytolytic peptide has ability to disrupt the integrity of cell membranes from both prokaryotes and eukaryotes. It permeabilizes both negatively charged prokaryotic (PE:PG) and zwitterionic eukaryotic (PC:cholesterol) model membranes. It has potent hemolytic activity on human erythrocytes and exhibits low antimicrobial activity against the Gram-negative bacterium E.coli (MIC&gt;50 uM) and the Gram-positive bacterium S.aureus (MIC=25-50 uM). Intracranial injection causes mice to shuffle backward until the encounter an obstacle, at which time the mouse jump into the air. The backward shuffle is reminiscent to the signature dance 'moonwalk' that gained widespread popularity after being performed by Michael Jackson. The polypeptide is Conolysin-Mt1 (Conus mustelinus (Weasel cone)).